The following is a 398-amino-acid chain: Inner membrane protein YjgN (398 aa).

The Cytoplasmic segment spans residues 1-24; sequence MAQVINEMDVPSHSFVFHGTGERY. Residues 25 to 45 traverse the membrane as a helical segment; sequence FLICVVNVLLTIITLGIYLPW. At 46-73 the chain is on the periplasmic side; the sequence is ALMKCKRYLYANMEVNGQRFSYGITGGN. Residues 74-94 traverse the membrane as a helical segment; that stretch reads VFVSCLFFVFFYFAILMTVSA. A topological domain (cytoplasmic) is located at residue aspartate 95. The helical transmembrane segment at 96–116 threads the bilayer; that stretch reads MPLVGCVLTLLLLVLLIFMAA. Residues 117-142 are Periplasmic-facing; it reads KGLRHQALMTSLNGVRFSFNCSMKGF. The chain crosses the membrane as a helical span at residues 143-163; it reads WWVTFFLPILMAIGMGTVFFI. Over 164-175 the chain is Cytoplasmic; the sequence is STKMLPANSSSS. The chain crosses the membrane as a helical span at residues 176–196; it reads VIISMVLMAIVGIVSIGIFNG. Over 197-228 the chain is Periplasmic; it reads TLYSLVMSFLWSNTSFGIHRFKVKLDTTYCIK. A helical membrane pass occupies residues 229–249; it reads YAILAFLALLPFLAVAGYIIF. The Cytoplasmic segment spans residues 250 to 278; the sequence is DQILNAYDSSVYANDDIENLQQFMEMQRK. The chain crosses the membrane as a helical span at residues 279 to 299; sequence MIIAQLIYYFGIAVSTSYLTV. Topologically, residues 300 to 333 are periplasmic; it reads SLRNHFMSNLSLNDGRIRFRLTLTYHGMLYRMCA. The chain crosses the membrane as a helical span at residues 334 to 354; it reads LVVISGITGGLAYPLLKIWMI. Topologically, residues 355 to 398 are cytoplasmic; the sequence is DWQAKNTYLLGDLDDLPLINKEEQPDKGFLASISRGVMPSLPFL.

It localises to the cell inner membrane. In Escherichia coli (strain K12), this protein is Inner membrane protein YjgN (yjgN).